A 109-amino-acid polypeptide reads, in one-letter code: Acylphosphatase (109 aa).

Positions 22 to 109 (RLRARVEGVV…GEFSSFDVVY (88 aa)) constitute an Acylphosphatase-like domain. Active-site residues include arginine 37 and asparagine 55.

It belongs to the acylphosphatase family.

It catalyses the reaction an acyl phosphate + H2O = a carboxylate + phosphate + H(+). The chain is Acylphosphatase (acyP) from Arthrobacter sp. (strain FB24).